We begin with the raw amino-acid sequence, 641 residues long: Sodium-dependent nutrient amino acid transporter 1 (641 aa).

Positions methionine 1–glutamate 21 are enriched in polar residues. The tract at residues methionine 1–threonine 37 is disordered. Topologically, residues methionine 1–asparagine 38 are cytoplasmic. Residues asparagine 22–glutamate 35 show a composition bias toward basic and acidic residues. 3 consecutive transmembrane segments (helical) span residues tryptophan 39–valine 59, glycine 72–leucine 92, and threonine 125–valine 145. Asparagine 181, asparagine 190, and asparagine 198 each carry an N-linked (GlcNAc...) asparagine glycan. The next 9 membrane-spanning stretches (helical) occupy residues proline 229 to methionine 249, alanine 258 to valine 278, alanine 307 to serine 327, isoleucine 341 to leucine 361, leucine 401 to leucine 421, valine 441 to glycine 461, threonine 474 to leucine 494, cysteine 516 to isoleucine 536, and isoleucine 552 to tyrosine 572.

The protein belongs to the sodium:neurotransmitter symporter (SNF) (TC 2.A.22) family.

Its subcellular location is the membrane. Unusual broad substrate spectrum amino acid:sodium cotransporter that promotes absorption of the D isomers of essential amino acids. Neutral amino acids are the preferred substrates, especially methionine and phenylalanine. This is Sodium-dependent nutrient amino acid transporter 1 from Drosophila willistoni (Fruit fly).